Here is a 254-residue protein sequence, read N- to C-terminus: Triosephosphate isomerase (254 aa).

Position 12 to 14 (12 to 14 (NWK)) interacts with substrate. His99 acts as the Electrophile in catalysis. Glu169 serves as the catalytic Proton acceptor. Residues Gly175, Ser214, and 235–236 (GG) contribute to the substrate site.

Belongs to the triosephosphate isomerase family. Homodimer.

Its subcellular location is the cytoplasm. It catalyses the reaction D-glyceraldehyde 3-phosphate = dihydroxyacetone phosphate. Its pathway is carbohydrate biosynthesis; gluconeogenesis. It functions in the pathway carbohydrate degradation; glycolysis; D-glyceraldehyde 3-phosphate from glycerone phosphate: step 1/1. Involved in the gluconeogenesis. Catalyzes stereospecifically the conversion of dihydroxyacetone phosphate (DHAP) to D-glyceraldehyde-3-phosphate (G3P). The sequence is that of Triosephosphate isomerase from Bartonella bacilliformis (strain ATCC 35685 / KC583 / Herrer 020/F12,63).